A 291-amino-acid polypeptide reads, in one-letter code: MDRRISGSTQLLGLIGDPVAHSLSPAMHNAALAAMGEDYCYVPFPVAAERLAVAVAGLAAIGVRGFNVTIPHKQAILPLLSQVEARAAAVGAVNTVYALPEGGWGGTNTDIDGFVQPLLGLEKGIPTLILGSGGAARAAIQGCLELGLGPVRVAGRSPEKLRALQQTWPQVETLSWAELDRHLAETRLLVNTTPVGMHKPGSLAELSPLSWEQLRLLPAGATVYDLVYVPDPTPLLRMAAELGHTPIGGLEMLIHQGAKALSLWLGGKLVPVEVMRQAARQQLAQIGDPNS.

Shikimate contacts are provided by residues 22–24 (SLS) and T69. K73 functions as the Proton acceptor in the catalytic mechanism. 2 residues coordinate shikimate: N94 and D110. NADP(+) is bound by residues 131-135 (GSGGA) and L226. Y228 provides a ligand contact to shikimate. G249 contacts NADP(+).

Belongs to the shikimate dehydrogenase family. As to quaternary structure, homodimer.

It carries out the reaction shikimate + NADP(+) = 3-dehydroshikimate + NADPH + H(+). The protein operates within metabolic intermediate biosynthesis; chorismate biosynthesis; chorismate from D-erythrose 4-phosphate and phosphoenolpyruvate: step 4/7. Functionally, involved in the biosynthesis of the chorismate, which leads to the biosynthesis of aromatic amino acids. Catalyzes the reversible NADPH linked reduction of 3-dehydroshikimate (DHSA) to yield shikimate (SA). The sequence is that of Shikimate dehydrogenase (NADP(+)) from Synechococcus sp. (strain JA-3-3Ab) (Cyanobacteria bacterium Yellowstone A-Prime).